Here is a 132-residue protein sequence, read N- to C-terminus: Major pollen allergen Art v 1 (132 aa).

A signal peptide spans 1–24 (MAKCSYVFCAVLLIFIVAIGEMEA). The segment at 28-77 (KLCEKTSKTYSGKCDNKKCDKKCIEWEKAQHGACHKREAGKESCFCYFDC) is defensin-like domain. Disulfide bonds link C30/C77, C41/C61, C46/C71, and C50/C73. Epitope recognized by IgE antibodies of mugwort pollen-sensitized patients stretches follow at residues 64–70 (REAGKES) and 79–87 (KSPPGATPA). Positions 81–132 (PPGATPAPPGAAPPPAAGGSPSPPADGGSPPPPADGGSPPVDGGSPPPPSTH) are disordered. Residues 83–114 (GATPAPPGAAPPPAAGGSPSPPADGGSPPPPA) are compositionally biased toward pro residues. The span at 115–124 (DGGSPPVDGG) shows a compositional bias: low complexity.

In the N-terminal section; belongs to the DEFL family. Post-translationally, the mature protein extracted from the plant exhibits an average rate of 76% of hydroxyprolines. O-glycosylated. O-linkage of 3 galactoses plus 9-16 or 21-23 arabinose residues attached on one or two hydroxyprolines.

It is found in the secreted. The sequence is that of Major pollen allergen Art v 1 from Artemisia vulgaris (Mugwort).